Here is a 290-residue protein sequence, read N- to C-terminus: L-proline cis-3-hydroxylase 1 (290 aa).

Fe cation-binding residues include histidine 107, aspartate 109, and histidine 158. Residue arginine 168 coordinates 2-oxoglutarate.

Belongs to the L-proline cis-4-/cis-3-hydroxylase family. Homodimer. It depends on Fe(2+) as a cofactor.

The enzyme catalyses L-proline + 2-oxoglutarate + O2 = cis-3-hydroxy-L-proline + succinate + CO2. With respect to regulation, inhibited by metal ions such as Co(2+), Zn(2+), Ni(2+) or Cu(2+). Is also inhibited by EDTA in vitro. Unlike the procollagen-proline cis-3- and trans-4-hydroxylases from mammals, does not necessarily require L-ascorbate for activity although it does increase the activity of the enzyme. Dioxygenase that catalyzes the 2-oxoglutarate-dependent selective hydroxylation of free L-proline to cis-3-hydroxy-L-proline (cis-3-Hyp). D-proline, trans-4-hydroxy-L-proline, cis-4-hydroxy-L-proline, cis-4-hydroxy-D-proline, and 3,4-dehydro-DL-proline are not substrates. The polypeptide is L-proline cis-3-hydroxylase 1 (Streptomyces sp).